We begin with the raw amino-acid sequence, 681 residues long: Sodium-dependent phosphate transporter 1 (681 aa).

A run of 6 helical transmembrane segments spans residues 25 to 45 (NLWM…SVGA), 66 to 86 (ACIL…AKVS), 106 to 126 (LMAG…VASF), 162 to 182 (IVMS…ILFF), 201 to 221 (ALPI…MYTG), and 234 to 254 (GTIL…WFFV). Residues 266 to 295 (VKSSPSESPLMEKKNNLKDHEETKMAPGDV) are disordered. 2 positions are modified to phosphoserine: Ser-269 and Ser-273. A compositionally biased stretch (basic and acidic residues) spans 275-289 (LMEKKNNLKDHEETK). 4 helical membrane passes run 513-533 (VSLL…FAHG), 561-581 (ATPI…LWVW), 602-622 (FSIE…GLPI), and 652-672 (IFMA…AIMA).

Belongs to the inorganic phosphate transporter (PiT) (TC 2.A.20) family. In terms of tissue distribution, ubiquitously expressed.

The protein localises to the cell membrane. The catalysed reaction is 2 Na(+)(out) + phosphate(out) = 2 Na(+)(in) + phosphate(in). Sodium-phosphate symporter which preferentially transports the monovalent form of phosphate with a stoichiometry of two sodium ions per phosphate ion. May play a role in extracellular matrix and cartilage calcification as well as in vascular calcification. Essential for cell proliferation but this function is independent of its phosphate transporter activity. The chain is Sodium-dependent phosphate transporter 1 (Slc20a1) from Rattus norvegicus (Rat).